Here is a 311-residue protein sequence, read N- to C-terminus: Aspartate carbamoyltransferase catalytic subunit (311 aa).

Carbamoyl phosphate-binding residues include R59 and T60. An L-aspartate-binding site is contributed by K87. Residues R109, H139, and Q142 each contribute to the carbamoyl phosphate site. L-aspartate is bound by residues R172 and R224. Residues A265 and P266 each contribute to the carbamoyl phosphate site.

Belongs to the aspartate/ornithine carbamoyltransferase superfamily. ATCase family. Heterododecamer (2C3:3R2) of six catalytic PyrB chains organized as two trimers (C3), and six regulatory PyrI chains organized as three dimers (R2).

The catalysed reaction is carbamoyl phosphate + L-aspartate = N-carbamoyl-L-aspartate + phosphate + H(+). The protein operates within pyrimidine metabolism; UMP biosynthesis via de novo pathway; (S)-dihydroorotate from bicarbonate: step 2/3. Its function is as follows. Catalyzes the condensation of carbamoyl phosphate and aspartate to form carbamoyl aspartate and inorganic phosphate, the committed step in the de novo pyrimidine nucleotide biosynthesis pathway. This Streptococcus pyogenes serotype M18 (strain MGAS8232) protein is Aspartate carbamoyltransferase catalytic subunit.